Here is a 1043-residue protein sequence, read N- to C-terminus: Desmoglein-1 (1043 aa).

The N-terminal stretch at 1 to 23 (MNWPFFRAAVVLFIFLVVLEVNS) is a signal peptide. The propeptide occupies 24 to 49 (DFRIQVRDYNTKNGTIKWHSLRRQKR). Cadherin domains lie at 50–158 (EWIK…PVFS), 159–270 (MSTF…PYME), 271–385 (LPTQ…GSVF), and 386–498 (RPGS…VNGS). Residues 50–551 (EWIKFAAACR…PLRDNVHFGP (502 aa)) are Extracellular-facing. N-linked (GlcNAc...) asparagine glycans are attached at residues N110 and N180. The N-linked (GlcNAc...) asparagine glycan is linked to N496. A helical transmembrane segment spans residues 552 to 572 (AGIGLLIMGFLVLGLVPFLLM). Over 573-1043 (CCDCGGAPGG…TKYSTVQYTK (471 aa)) the chain is Cytoplasmic. Residues 770-807 (DVEPFPDSDPSWPPKSTEPVCPPQGTEPTGGGHPPISP) form a disordered region. Desmoglein repeat repeat units lie at residues 819 to 845 (TYPS…TVTE), 846 to 875 (SYTS…ERVV), 876 to 905 (GPIS…ERVI), 906 to 933 (APSS…ERVI), and 934 to 962 (QPTS…ERVV).

As to quaternary structure, binds to JUP/plakoglobin. Interacts with PKP2. Interacts with DSC3; there is evidence to suggest that the interaction promotes cell-cell adhesion of keratinocytes. As to expression, expressed in the epidermis. Expressed in the muzzle epithelium.

The protein resides in the cell membrane. The protein localises to the cell junction. It localises to the desmosome. Its subcellular location is the cytoplasm. It is found in the nucleus. Its function is as follows. Component of intercellular desmosome junctions. Involved in the interaction of plaque proteins and intermediate filaments mediating cell-cell adhesion. The protein is Desmoglein-1 (DSG1) of Bos taurus (Bovine).